The following is a 990-amino-acid chain: Mediator of RNA polymerase II transcription subunit 5 (990 aa).

The protein belongs to the Mediator complex subunit 5 family. Component of the Mediator complex.

It is found in the nucleus. Component of the Mediator complex, a coactivator involved in the regulated transcription of nearly all RNA polymerase II-dependent genes. Mediator functions as a bridge to convey information from gene-specific regulatory proteins to the basal RNA polymerase II transcription machinery. Mediator is recruited to promoters by direct interactions with regulatory proteins and serves as a scaffold for the assembly of a functional preinitiation complex with RNA polymerase II and the general transcription factors. This is Mediator of RNA polymerase II transcription subunit 5 (NUT1) from Debaryomyces hansenii (strain ATCC 36239 / CBS 767 / BCRC 21394 / JCM 1990 / NBRC 0083 / IGC 2968) (Yeast).